We begin with the raw amino-acid sequence, 280 residues long: 3-methyl-2-oxobutanoate hydroxymethyltransferase (280 aa).

Mg(2+) contacts are provided by D49 and D88. Residues 49–50 (DS), D88, and K118 contribute to the 3-methyl-2-oxobutanoate site. Residue E120 coordinates Mg(2+). The active-site Proton acceptor is the E187.

It belongs to the PanB family. As to quaternary structure, homodecamer; pentamer of dimers. Requires Mg(2+) as cofactor.

It is found in the cytoplasm. It carries out the reaction 3-methyl-2-oxobutanoate + (6R)-5,10-methylene-5,6,7,8-tetrahydrofolate + H2O = 2-dehydropantoate + (6S)-5,6,7,8-tetrahydrofolate. The protein operates within cofactor biosynthesis; (R)-pantothenate biosynthesis; (R)-pantoate from 3-methyl-2-oxobutanoate: step 1/2. In terms of biological role, catalyzes the reversible reaction in which hydroxymethyl group from 5,10-methylenetetrahydrofolate is transferred onto alpha-ketoisovalerate to form ketopantoate. This chain is 3-methyl-2-oxobutanoate hydroxymethyltransferase, found in Xanthobacter autotrophicus (strain ATCC BAA-1158 / Py2).